Consider the following 1403-residue polypeptide: Baculoviral IAP repeat-containing protein 1a (1403 aa).

BIR repeat units follow at residues 63-128, 162-228, and 281-346; these read RLKT…EFLQ, RLES…EFLQ, and RMDT…VFLQ. Cys-315, Cys-318, His-335, and Cys-342 together coordinate Zn(2+). One can recognise an NACHT domain in the interval 464–758; the sequence is SVMCVEGETG…EFLAAMRLTE (295 aa). ATP is bound at residue Lys-476.

In terms of assembly, interacts (via NACHT domain) with APAF1 (via CARD and NACHT domains).

Functionally, anti-apoptotic protein which acts by inhibiting the activities of CASP3, CASP7 and CASP9. Can inhibit the autocleavage of pro-CASP9 and cleavage of pro-CASP3 by CASP9. Capable of inhibiting CASP9 autoproteolysis at 'Asp-315' and decreasing the rate of auto proteolysis at 'Asp-330'. Acts as a mediator of neuronal survival in pathological conditions. Prevents motor-neuron apoptosis induced by a variety of signals. The polypeptide is Baculoviral IAP repeat-containing protein 1a (Naip1) (Mus musculus (Mouse)).